The primary structure comprises 42 residues: Cytochrome b559 subunit beta (42 aa).

A helical transmembrane segment spans residues 17 to 33; the sequence is WLAIHGLAVPTVFFLGA. Heme is bound at residue H21.

Belongs to the PsbE/PsbF family. In terms of assembly, heterodimer of an alpha subunit and a beta subunit. PSII is composed of 1 copy each of membrane proteins PsbA, PsbB, PsbC, PsbD, PsbE, PsbF, PsbH, PsbI, PsbJ, PsbK, PsbL, PsbM, PsbT, PsbX, PsbY, PsbZ, Psb30/Ycf12, at least 3 peripheral proteins of the oxygen-evolving complex and a large number of cofactors. It forms dimeric complexes. It depends on heme b as a cofactor.

It localises to the plastid. The protein localises to the chloroplast thylakoid membrane. Its function is as follows. This b-type cytochrome is tightly associated with the reaction center of photosystem II (PSII). PSII is a light-driven water:plastoquinone oxidoreductase that uses light energy to abstract electrons from H(2)O, generating O(2) and a proton gradient subsequently used for ATP formation. It consists of a core antenna complex that captures photons, and an electron transfer chain that converts photonic excitation into a charge separation. The sequence is that of Cytochrome b559 subunit beta from Guillardia theta (Cryptophyte).